The following is a 285-amino-acid chain: V-set and transmembrane domain-containing protein 2B (285 aa).

Positions 1–28 are cleaved as a signal peptide; it reads MEQRNRLGALGYLLPLLLHSLLLFVADA. The Ig-like V-type domain maps to 29–143; it reads TFTEVPKDVT…DDDTQEHKAQ (115 aa). Over 29 to 263 the chain is Extracellular; it reads TFTEVPKDVT…HGSGTGPGYS (235 aa). Cys-49 and Cys-127 are joined by a disulfide. Residues 160 to 225 form a disordered region; sequence AEAVSHIQSS…AAAAAASATH (66 aa). Composition is skewed to low complexity over residues 176–189 and 208–225; these read ASSA…GAAV and PAGS…SATH. Residues 264-284 traverse the membrane as a helical segment; that stretch reads ADPLLSLLLLALHKFLHPLLG. His-285 is a topological domain (cytoplasmic).

The protein localises to the membrane. The protein is V-set and transmembrane domain-containing protein 2B (Vstm2b) of Mus musculus (Mouse).